Here is a 143-residue protein sequence, read N- to C-terminus: Putative complexin-1 (143 aa).

Residues Glu-16–Tyr-72 form a disordered region. Basic and acidic residues-rich tracts occupy residues Met-23–Thr-33 and Leu-44–Tyr-72. Positions Ile-40–Lys-71 form a coiled coil.

It belongs to the complexin/synaphin family.

It is found in the cytoplasm. It localises to the cytosol. Positively regulates a late step in synaptic vesicle exocytosis. The sequence is that of Putative complexin-1 (cpx-1) from Caenorhabditis elegans.